Reading from the N-terminus, the 463-residue chain is ATP synthase subunit beta (463 aa).

Residue 153–160 coordinates ATP; that stretch reads GGAGVGKT.

It belongs to the ATPase alpha/beta chains family. As to quaternary structure, F-type ATPases have 2 components, CF(1) - the catalytic core - and CF(0) - the membrane proton channel. CF(1) has five subunits: alpha(3), beta(3), gamma(1), delta(1), epsilon(1). CF(0) has three main subunits: a(1), b(2) and c(9-12). The alpha and beta chains form an alternating ring which encloses part of the gamma chain. CF(1) is attached to CF(0) by a central stalk formed by the gamma and epsilon chains, while a peripheral stalk is formed by the delta and b chains.

It localises to the cell inner membrane. It catalyses the reaction ATP + H2O + 4 H(+)(in) = ADP + phosphate + 5 H(+)(out). Its function is as follows. Produces ATP from ADP in the presence of a proton gradient across the membrane. The catalytic sites are hosted primarily by the beta subunits. The sequence is that of ATP synthase subunit beta from Burkholderia cepacia (Pseudomonas cepacia).